We begin with the raw amino-acid sequence, 141 residues long: Mitochondrial import inner membrane translocase subunit Tim16 (141 aa).

Disordered stretches follow at residues 34–53 (AARRAGGGKQGDKSAESNLR) and 108–141 (LDHEIKAHEQPRSSNTEAAQDTAEESQSRSRQRR). A J-like region spans residues 60-113 (EAKQILNIDDPKNVDAITKNYEHLFQVNERSKGGSFYIQSKVFRAKERLDHEIK). Residues 108–118 (LDHEIKAHEQP) are compositionally biased toward basic and acidic residues.

Belongs to the TIM16/PAM16 family. As to quaternary structure, probable component of the PAM complex at least composed of a mitochondrial HSP70 protein, Roe1, TIM44, blp/TIM16 and TIM14. Associates with the TIM23 complex. In terms of tissue distribution, expressed in distinct cells in the embryonic and larval nervous system.

The protein localises to the mitochondrion inner membrane. Functionally, regulates ATP-dependent protein translocation into the mitochondrial matrix. Essential for larval development. The protein is Mitochondrial import inner membrane translocase subunit Tim16 (blp) of Drosophila melanogaster (Fruit fly).